The chain runs to 144 residues: 3-hydroxyacyl-[acyl-carrier-protein] dehydratase FabZ (144 aa).

Histidine 51 is an active-site residue.

The protein belongs to the thioester dehydratase family. FabZ subfamily.

Its subcellular location is the cytoplasm. It carries out the reaction a (3R)-hydroxyacyl-[ACP] = a (2E)-enoyl-[ACP] + H2O. Its function is as follows. Involved in unsaturated fatty acids biosynthesis. Catalyzes the dehydration of short chain beta-hydroxyacyl-ACPs and long chain saturated and unsaturated beta-hydroxyacyl-ACPs. The sequence is that of 3-hydroxyacyl-[acyl-carrier-protein] dehydratase FabZ from Clostridium botulinum (strain 657 / Type Ba4).